The following is a 162-amino-acid chain: uncharacterized protein (162 aa).

4 helical membrane passes run 15–35 (VLAIFIVLLIISAYLGFAPAL), 43–63 (VCHFFVFFLLTLVFYWVFDLS), 70–90 (LTILVCGVFGGLGSEFVQSFL), and 97–117 (LFDIVANLLGCSLALLLNILY).

The protein resides in the membrane. This is an uncharacterized protein from Schizosaccharomyces pombe (strain 972 / ATCC 24843) (Fission yeast).